Reading from the N-terminus, the 59-residue chain is Potassium channel toxin alpha-KTx 3.5 (59 aa).

Residues 1-22 (MKVFSAVLIILFVCSMIIGINA) form the signal peptide. Disulfide bonds link Cys29/Cys49, Cys35/Cys54, and Cys39/Cys56. The interaction with Ca(2+)-activated K(+) channels stretch occupies residues 47-54 (GKCMNGKC).

The protein belongs to the short scorpion toxin superfamily. Potassium channel inhibitor family. Alpha-KTx 03 subfamily. In terms of tissue distribution, expressed by the venom gland.

The protein localises to the secreted. In terms of biological role, has also been shown to inhibit with high potency Kv1.3/KCNA3 and with low potency Kv1.1/KCNA1 and Kv1.2/KCNA2 voltage-gated potassium channels. Also binds and inhibits the molluscan calcium-activated potassium channels KCa (Kd=135 nM). This chain is Potassium channel toxin alpha-KTx 3.5 (KTX2), found in Androctonus australis (Sahara scorpion).